We begin with the raw amino-acid sequence, 635 residues long: Threonine--tRNA ligase (635 aa).

The 61-residue stretch at 1 to 61 (MITVRLPDGS…EKDSDLAIIT (61 aa)) folds into the TGS domain. The tract at residues 242-533 (DHRKLGKQLD…LIEHYAGALP (292 aa)) is catalytic. The Zn(2+) site is built by Cys-333, His-384, and His-510.

The protein belongs to the class-II aminoacyl-tRNA synthetase family. In terms of assembly, homodimer. Requires Zn(2+) as cofactor.

Its subcellular location is the cytoplasm. The enzyme catalyses tRNA(Thr) + L-threonine + ATP = L-threonyl-tRNA(Thr) + AMP + diphosphate + H(+). Its function is as follows. Catalyzes the attachment of threonine to tRNA(Thr) in a two-step reaction: L-threonine is first activated by ATP to form Thr-AMP and then transferred to the acceptor end of tRNA(Thr). Also edits incorrectly charged L-seryl-tRNA(Thr). In Janthinobacterium sp. (strain Marseille) (Minibacterium massiliensis), this protein is Threonine--tRNA ligase.